A 134-amino-acid chain; its full sequence is Arsenate reductase (134 aa).

Catalysis depends on nucleophile residues Cys-11, Cys-83, and Cys-90. 2 cysteine pairs are disulfide-bonded: Cys-11–Cys-83 and Cys-83–Cys-90.

It belongs to the low molecular weight phosphotyrosine protein phosphatase family. Thioredoxin-coupled ArsC subfamily.

The protein resides in the cytoplasm. The catalysed reaction is arsenate + [thioredoxin]-dithiol + H(+) = arsenite + [thioredoxin]-disulfide + H2O. In terms of biological role, catalyzes the reduction of arsenate [As(V)] to arsenite [As(III)]. This chain is Arsenate reductase, found in Bacillus cereus (strain Q1).